Here is a 427-residue protein sequence, read N- to C-terminus: Adenylosuccinate synthetase (427 aa).

GTP-binding positions include Gly12–Lys18 and Gly40–Thr42. The Proton acceptor role is filled by Asp13. The Mg(2+) site is built by Asp13 and Gly40. IMP-binding positions include Asp13 to Lys16, Asn38 to His41, Thr128, Arg142, Gln223, Thr238, and Arg302. The active-site Proton donor is His41. Substrate is bound at residue Thr298–Arg304. Residues Arg304, Lys330 to Asp332, and Ala412 to Gly414 each bind GTP.

This sequence belongs to the adenylosuccinate synthetase family. Homodimer. The cofactor is Mg(2+).

The protein resides in the cytoplasm. The catalysed reaction is IMP + L-aspartate + GTP = N(6)-(1,2-dicarboxyethyl)-AMP + GDP + phosphate + 2 H(+). It functions in the pathway purine metabolism; AMP biosynthesis via de novo pathway; AMP from IMP: step 1/2. Plays an important role in the de novo pathway of purine nucleotide biosynthesis. Catalyzes the first committed step in the biosynthesis of AMP from IMP. This is Adenylosuccinate synthetase from Desulfitobacterium hafniense (strain Y51).